The sequence spans 294 residues: Phosphatidylserine decarboxylase proenzyme (294 aa).

Active-site charge relay system; for autoendoproteolytic cleavage activity residues include D113, H169, and S256. Residue S256 is the Schiff-base intermediate with substrate; via pyruvic acid; for decarboxylase activity of the active site. S256 carries the pyruvic acid (Ser); by autocatalysis modification.

The protein belongs to the phosphatidylserine decarboxylase family. PSD-B subfamily. Prokaryotic type II sub-subfamily. In terms of assembly, heterodimer of a large membrane-associated beta subunit and a small pyruvoyl-containing alpha subunit. The cofactor is pyruvate. In terms of processing, is synthesized initially as an inactive proenzyme. Formation of the active enzyme involves a self-maturation process in which the active site pyruvoyl group is generated from an internal serine residue via an autocatalytic post-translational modification. Two non-identical subunits are generated from the proenzyme in this reaction, and the pyruvate is formed at the N-terminus of the alpha chain, which is derived from the carboxyl end of the proenzyme. The autoendoproteolytic cleavage occurs by a canonical serine protease mechanism, in which the side chain hydroxyl group of the serine supplies its oxygen atom to form the C-terminus of the beta chain, while the remainder of the serine residue undergoes an oxidative deamination to produce ammonia and the pyruvoyl prosthetic group on the alpha chain. During this reaction, the Ser that is part of the protease active site of the proenzyme becomes the pyruvoyl prosthetic group, which constitutes an essential element of the active site of the mature decarboxylase.

It is found in the cell membrane. It catalyses the reaction a 1,2-diacyl-sn-glycero-3-phospho-L-serine + H(+) = a 1,2-diacyl-sn-glycero-3-phosphoethanolamine + CO2. Its pathway is phospholipid metabolism; phosphatidylethanolamine biosynthesis; phosphatidylethanolamine from CDP-diacylglycerol: step 2/2. Catalyzes the formation of phosphatidylethanolamine (PtdEtn) from phosphatidylserine (PtdSer). This chain is Phosphatidylserine decarboxylase proenzyme, found in Clostridium perfringens (strain ATCC 13124 / DSM 756 / JCM 1290 / NCIMB 6125 / NCTC 8237 / Type A).